Here is a 1049-residue protein sequence, read N- to C-terminus: GPI inositol-deacylase (1049 aa).

A helical transmembrane segment spans residues 39–59 (ACSAYTLVTTALGFAAFFLML). The active site involves Ser222. 8 consecutive transmembrane segments (helical) span residues 699 to 719 (LWMR…ALVL), 742 to 762 (CMYS…ITLA), 798 to 818 (PFFW…CVMV), 867 to 887 (ILLS…VLCI), 917 to 937 (SIFI…VVWI), 944 to 964 (WLTP…ILLV), 986 to 1006 (VFLF…AYVL), and 1009 to 1029 (LANI…GLAF).

The protein belongs to the GPI inositol-deacylase family.

It localises to the endoplasmic reticulum membrane. Its function is as follows. Involved in inositol deacylation of GPI-anchored proteins which plays important roles in the quality control and ER-associated degradation of GPI-anchored proteins. The protein is GPI inositol-deacylase (BST1) of Phaeosphaeria nodorum (strain SN15 / ATCC MYA-4574 / FGSC 10173) (Glume blotch fungus).